Consider the following 169-residue polypeptide: Der GTPase-activating protein YihI (169 aa).

Disordered stretches follow at residues 1–98 (MKPS…PQAE) and 144–169 (GLSYDDDEEEEEDEKQEDMMRLLRGN). Positions 10 to 19 (SKGHAKARRK) are enriched in basic residues. Residues 20-30 (TREELDQEARD) are compositionally biased toward basic and acidic residues. Basic residues predominate over residues 31–40 (RKRQKKRRGH). The span at 49–58 (GNTTSGSKGQ) shows a compositional bias: polar residues. A compositionally biased stretch (acidic residues) spans 147–159 (YDDDEEEEEDEKQ). The span at 160–169 (EDMMRLLRGN) shows a compositional bias: basic and acidic residues.

The protein belongs to the YihI family. In terms of assembly, interacts with Der.

Functionally, a GTPase-activating protein (GAP) that modifies Der/EngA GTPase function. May play a role in ribosome biogenesis. This is Der GTPase-activating protein YihI from Escherichia coli O139:H28 (strain E24377A / ETEC).